The chain runs to 91 residues: Small ribosomal subunit protein bS16 (91 aa).

The protein belongs to the bacterial ribosomal protein bS16 family.

The polypeptide is Small ribosomal subunit protein bS16 (Ligilactobacillus salivarius (strain UCC118) (Lactobacillus salivarius)).